The chain runs to 205 residues: FMN-dependent NADH:quinone oxidoreductase (205 aa).

Residues Ser10 and 16 to 18 each bind FMN; that span reads SVS.

This sequence belongs to the azoreductase type 1 family. As to quaternary structure, homodimer. The cofactor is FMN.

It catalyses the reaction 2 a quinone + NADH + H(+) = 2 a 1,4-benzosemiquinone + NAD(+). The enzyme catalyses N,N-dimethyl-1,4-phenylenediamine + anthranilate + 2 NAD(+) = 2-(4-dimethylaminophenyl)diazenylbenzoate + 2 NADH + 2 H(+). In terms of biological role, quinone reductase that provides resistance to thiol-specific stress caused by electrophilic quinones. Functionally, also exhibits azoreductase activity. Catalyzes the reductive cleavage of the azo bond in aromatic azo compounds to the corresponding amines. The protein is FMN-dependent NADH:quinone oxidoreductase of Agrobacterium fabrum (strain C58 / ATCC 33970) (Agrobacterium tumefaciens (strain C58)).